Reading from the N-terminus, the 437-residue chain is Sperm-associated antigen 4 protein (437 aa).

Over residues 1 to 12 (MRRSSRPGSASS) the composition is skewed to low complexity. The disordered stretch occupies residues 1-88 (MRRSSRPGSA…KPAPRSHNWQ (88 aa)). 2 stretches are compositionally biased toward polar residues: residues 19 to 31 (NFFS…SITS) and 72 to 88 (WAGS…HNWQ). The next 2 membrane-spanning stretches (helical) occupy residues 135 to 155 (FLSL…DVLV) and 166 to 186 (FLFT…LGLL). The stretch at 197 to 244 (KEMLTLSEYHERVRSQGQQLQQLQAELDKLHKEVSTVRAANSERVAKL) forms a coiled coil. Positions 265 to 425 (GASIDLQKTS…YRVRAHGVRT (161 aa)) constitute an SUN domain.

Homodimer. Interacts with ODF1. May associate with microtubules. Interacts with SUN3 and SYNE1; suggesting the formation of a spermatogenesis-specific LINC complex; a SUN domain-based heterotrimer with SUN3 may associate with SYNE1. Interacts with SEPT12 and LMNB1; during spermatogenesis. As to expression, predominantly epressed in testis. Expressed in ejaculated spermatozoa (at protein level).

It localises to the membrane. Its subcellular location is the cytoplasm. The protein localises to the cytoskeleton. The protein resides in the flagellum axoneme. It is found in the nucleus envelope. It localises to the nucleus inner membrane. Involved in spermatogenesis. Required for sperm head formation but not required to establish and maintain general polarity of the sperm head. Required for anchoring and organization of the manchette. Required for targeting of SUN3 and probably SYNE1 through a probable SUN1:SYNE3 LINC complex to the nuclear envelope and involved in accurate posterior sperm head localization of the complex. May anchor SUN3 the nuclear envelope. Involved in maintenance of the nuclear envelope integrity. May assist the organization and assembly of outer dense fibers (ODFs), a specific structure of the sperm tail. In Homo sapiens (Human), this protein is Sperm-associated antigen 4 protein (SPAG4).